A 517-amino-acid polypeptide reads, in one-letter code: GMP synthase [glutamine-hydrolyzing] (517 aa).

In terms of domain architecture, Glutamine amidotransferase type-1 spans 9-199 (RILILDFGSQ…VLGVCGCERL (191 aa)). Cys86 (nucleophile) is an active-site residue. Catalysis depends on residues His173 and Glu175. In terms of domain architecture, GMPS ATP-PPase spans 200–392 (WTSESIIEDA…LGLPYNMLYR (193 aa)). 227–233 (SGGVDSS) is an ATP binding site.

As to quaternary structure, homodimer.

It carries out the reaction XMP + L-glutamine + ATP + H2O = GMP + L-glutamate + AMP + diphosphate + 2 H(+). The protein operates within purine metabolism; GMP biosynthesis; GMP from XMP (L-Gln route): step 1/1. Catalyzes the synthesis of GMP from XMP. This is GMP synthase [glutamine-hydrolyzing] from Vibrio parahaemolyticus serotype O3:K6 (strain RIMD 2210633).